Consider the following 366-residue polypeptide: ADP-ribosylarginine hydrolase Tri1 (366 aa).

Positions 1–65 are N-terminal extension; sequence MIDLREDTWT…LNTPPCLIPE (65 aa). An ADP-ribosyl hydrolase domain region spans residues 74–366; the sequence is GALVGLAIGD…LFYMAPEEDF (293 aa). Mg(2+) is bound by residues threonine 116, aspartate 117, aspartate 118, aspartate 161, and aspartate 317.

This sequence belongs to the ADP-ribosylglycohydrolase family. Forms a stable complex with cognate effector protein Tre1-Sp. Mg(2+) is required as a cofactor.

It carries out the reaction N(omega)-(ADP-D-ribosyl)-L-arginyl-[protein] + H2O = ADP-D-ribose + L-arginyl-[protein]. In terms of biological role, immunity component of a contact-dependent interbacterial competition system (also called effector-immunity systems). Acts as an arginine mono-ADP-ribosylhydrolase, mediating the removal of mono-ADP-ribose attached to arginine residues on proteins. De-ADP-ribosylates FtsZ, is able to act on other proteins as well. Neutralizes the toxic activity of cognate toxin Tre1-Sp. Expression of this protein alone in E.coli partially protects the cells against competition by wild-type S.proteamaculans. Neutralizes Tre1-Sp both by occluding its active site via its N-terminal extension and by hydrolyzing the ADP-ribosyl moiety from FtsZ; the 2 activities are dissociable by mutagenesis. The chain is ADP-ribosylarginine hydrolase Tri1 from Serratia proteamaculans (strain 568).